The sequence spans 683 residues: MPSRLSPPDIPPLQPTPTVSDGHHRFQTLPLIIAGSLTLTGVLLILVTLLIYRRLYRNRTAPSDLISNSKSPQHYQCRRFSYSQLRRATNSFSESTHLGHGGFGSVYKADFPSGGDSLAVKVMDTSAGSLQGEREFHNELSLSSHLIGSPHVVSLLGFSSDRRGRKLILVYELMANRSLQDALLDRKCVELMDWNKRFEIATDIAKGIEFLHHCCDPIIIHGDIKPSNILLDSDFKAKIGDFGLARVKSEDFDTRILIEEEDKSKDVVEDNGSILEETESVITVFEEGNNVVNLSPETCGISVLTETVASPGEKSGLSPENCAVSILTVEVGAASPAMASIPSPETCAISVLTDTGLSPESSKLKVGSKRDWWWKQDNNGGSRGGIESGSVKDYVMEWIGSEIKKERPSNNKEWINNGDGSSSVSKKKKKEKKRKPREWWKEEFCEELTRKKRKKKKKKKRGLSSISSIDSWFHRDDGASSVHDHNLNPTKRKKRNSIDWWVDGLSGELKSVMGKKNSQDSGLWCDVNVQKSGGVSSTPSMRGTVCYIAPECGGGGVLSEKCDVYSFGVLLLVLVSGRRPLQVTASPMSEFERANLISWAKQLACNGKLLELVDKSIHSLEKEQAVLCITIALLCLQRSPVKRPTMKEIVEMLSGVSEPPHLPFEFSPSPPMGFPFKSRKKAR.

The interval 1–21 (MPSRLSPPDIPPLQPTPTVSD) is disordered. The Extracellular segment spans residues 1–30 (MPSRLSPPDIPPLQPTPTVSDGHHRFQTLP). The chain crosses the membrane as a helical span at residues 31–51 (LIIAGSLTLTGVLLILVTLLI). Residues 52–683 (YRRLYRNRTA…FPFKSRKKAR (632 aa)) are Cytoplasmic-facing. Residues 92 to 664 (FSESTHLGHG…GVSEPPHLPF (573 aa)) enclose the Protein kinase domain. ATP is bound by residues 98–106 (LGHGGFGSV) and Lys121. Asp223 functions as the Proton acceptor in the catalytic mechanism. The interval 406–436 (ERPSNNKEWINNGDGSSSVSKKKKKEKKRKP) is disordered. Over residues 411 to 424 (NKEWINNGDGSSSV) the composition is skewed to polar residues. Residues 425–436 (SKKKKKEKKRKP) show a composition bias toward basic residues.

The protein belongs to the protein kinase superfamily. Ser/Thr protein kinase family.

It localises to the cell membrane. The enzyme catalyses L-seryl-[protein] + ATP = O-phospho-L-seryl-[protein] + ADP + H(+). It carries out the reaction L-threonyl-[protein] + ATP = O-phospho-L-threonyl-[protein] + ADP + H(+). This chain is Receptor-like serine/threonine-protein kinase At2g45590, found in Arabidopsis thaliana (Mouse-ear cress).